Reading from the N-terminus, the 51-residue chain is Ribosome biogenesis protein Nop10 (51 aa).

The protein belongs to the NOP10 family.

In terms of biological role, involved in ribosome biogenesis; more specifically in 18S rRNA pseudouridylation and in cleavage of pre-rRNA. The polypeptide is Ribosome biogenesis protein Nop10 (Methanococcus maripaludis (strain C7 / ATCC BAA-1331)).